Reading from the N-terminus, the 600-residue chain is Albumin (600 aa).

An N-terminal signal peptide occupies residues 1-10 (LLFLFSSAYS). The propeptide occupies 11 to 16 (RGVFRR). Albumin domains follow at residues 11-202 (RGVF…DELR), 203-395 (DEGK…EFQP), and 396-593 (LVEE…KFVA). His-19 contributes to the Cu cation binding site. Ser-21 carries the post-translational modification Phosphoserine. Ca(2+) is bound by residues Glu-22 and Asp-29. Cys-69 and Cys-78 are joined by a disulfide. 2 positions are modified to phosphoserine: Ser-74 and Ser-81. Residue His-83 coordinates Zn(2+). 6 disulfide bridges follow: Cys-91/Cys-107, Cys-106/Cys-117, Cys-140/Cys-185, Cys-184/Cys-193, Cys-216/Cys-262, and Cys-261/Cys-269. Thr-99 carries the phosphothreonine modification. Lys-221 carries the post-translational modification N6-succinyllysine. Lys-256 serves as a coordination point for (4Z,15Z)-bilirubin IXalpha. Glu-260 contacts Ca(2+). His-263 and Asp-265 together coordinate Zn(2+). Ca(2+)-binding residues include Asp-265, Glu-268, Asp-271, and Asp-275. Cystine bridges form between Cys-281-Cys-295, Cys-294-Cys-305, Cys-332-Cys-377, Cys-376-Cys-385, Cys-408-Cys-454, Cys-453-Cys-464, Cys-477-Cys-493, and Cys-492-Cys-503. Ser-289 is subject to Phosphoserine. The residue at position 435 (Ser-435) is a Phosphoserine. Phosphothreonine occurs at positions 436 and 438. An N6-succinyllysine modification is found at Lys-452. At Ser-505 the chain carries Phosphoserine. 2 cysteine pairs are disulfide-bonded: Cys-530-Cys-575 and Cys-574-Cys-583. Lys-535 carries the post-translational modification N6-succinyllysine. Lys-550 is subject to N6-methyllysine. Lys-580 carries the post-translational modification N6-succinyllysine.

It belongs to the ALB/AFP/VDB family. In terms of assembly, interacts with FCGRT; this interaction regulates ALB homeostasis. Interacts with TASOR. In plasma, occurs in a covalently-linked complex with chromophore-bound alpha-1-microglobulin; this interaction does not prevent fatty acid binding to ALB. In terms of processing, phosphorylated by FAM20C in the extracellular medium. As to expression, plasma.

The protein localises to the secreted. Binds water, Ca(2+), Na(+), K(+), fatty acids, hormones, bilirubin and drugs. Its main function is the regulation of the colloidal osmotic pressure of blood. Major zinc transporter in plasma, typically binds about 80% of all plasma zinc. Major calcium and magnesium transporter in plasma, binds approximately 45% of circulating calcium and magnesium in plasma. Potentially has more than two calcium-binding sites and might additionally bind calcium in a non-specific manner. The shared binding site between zinc and calcium at residue Asp-265 suggests a crosstalk between zinc and calcium transport in the blood. The rank order of affinity is zinc &gt; calcium &gt; magnesium. Binds to the bacterial siderophore enterobactin and inhibits enterobactin-mediated iron uptake of E.coli from ferric transferrin, and may thereby limit the utilization of iron and growth of enteric bacteria such as E.coli. Does not prevent iron uptake by the bacterial siderophore aerobactin. The sequence is that of Albumin (ALB) from Macaca mulatta (Rhesus macaque).